Consider the following 1064-residue polypeptide: WD repeat-containing protein on Y chromosome (1064 aa).

WD repeat units lie at residues Glu150–Ala194, Arg317–Ala356, Gly360–Thr399, Thr450–Ile489, Ile502–Asn541, Phe589–Ser629, Lys742–Ser781, and Gly825–Leu864. A disordered region spans residues Ser1022 to Arg1044.

In Drosophila ananassae (Fruit fly), this protein is WD repeat-containing protein on Y chromosome.